The sequence spans 1141 residues: Sterol regulatory element-binding protein 2 (1141 aa).

The tract at residues 1 to 50 (MDDSGELGGLETMETLTELGDELTLGDIDEMLQFVSNQVGEFPDLFSEQL) is transcriptional activation (acidic). The Cytoplasmic portion of the chain corresponds to 1 to 479 (MDDSGELGGL…PPVALGMVDR (479 aa)). The disordered stretch occupies residues 48–144 (EQLCSSFPGS…PQPQPQPQTQ (97 aa)). A compositionally biased stretch (low complexity) spans 63 to 82 (SSGSSGSSSSSSNGRGSSSG). A compositionally biased stretch (polar residues) spans 88 to 97 (VQRSFTQVTL). Positions 98 to 110 (PSFSPSAASPQAP) are enriched in low complexity. The span at 114-126 (VKVSPTSVPTTPR) shows a compositional bias: polar residues. The segment at 237-491 (QQVPVLVQPQ…ILLCVLTFLC (255 aa)) is interaction with LMNA. One can recognise a bHLH domain in the interval 330–380 (ERRTTHNIIEKRYRSSINDKIIELKDLVMGTDAKMHKSGVLRKAIDYIKYL). A leucine-zipper region spans residues 380-401 (LQQVNHKLRQENMVLKLANQKN). Lysine 464 is covalently cross-linked (Glycyl lysine isopeptide (Lys-Gly) (interchain with G-Cter in SUMO2)). A helical membrane pass occupies residues 480 to 500 (SRILLCVLTFLCLSFNPLTSL). At 501 to 533 (LQWGGAHDSDQHPHSGSGRSVLSFESGSGGWFD) the chain is on the lumenal side. Residues 534-554 (WMMPTLLLWLVNGVIVLSVFV) traverse the membrane as a helical segment. Residues 555 to 1139 (KLLVHGEPVI…VKLGGGTAIA (585 aa)) are Cytoplasmic-facing. A phosphoserine mark is found at serine 855 and serine 1098.

This sequence belongs to the SREBP family. Forms a tight complex with SCAP, the SCAP-SREBP complex, in the endoplasmic reticulum membrane and the Golgi apparatus. Interacts with PAQR3; the interaction anchors the SCAP-SREBP complex to the Golgi apparatus in low cholesterol conditions. Interacts (via C-terminal domain) with RNF139. In terms of assembly, homodimer; efficient DNA binding of the soluble transcription factor fragment requires dimerization with another bHLH protein. Interacts with LMNA. Post-translationally, processed in the Golgi apparatus, releasing the protein from the membrane. At low cholesterol the SCAP-SREBP complex is recruited into COPII vesicles for export from the endoplasmic reticulum. In the Golgi, complex SREBPs are cleaved sequentially by site-1 (MBTPS1, S1P) and site-2 (MBTPS2, S2P) protease. The first cleavage by site-1 protease occurs within the luminal loop, the second cleavage by site-2 protease occurs within the first transmembrane domain, releasing the transcription factor from the Golgi membrane. Apoptosis triggers cleavage by the cysteine proteases caspase-3 and caspase-7. Cleavage and activation is induced by mediated cholesterol efflux. Phosphorylated by AMPK, leading to suppress protein processing and nuclear translocation, and repress target gene expression. In terms of processing, SCAP-free SREBF2 is ubiquitinated by the BCR(ARMC5) complex, leading to its degradation. Post-translationally, ubiquitinated; the nuclear form has a rapid turnover and is rapidly ubiquitinated and degraded by the proteasome in the nucleus. Ubiquitously expressed in adult and fetal tissues.

The protein resides in the endoplasmic reticulum membrane. The protein localises to the golgi apparatus membrane. Its subcellular location is the cytoplasmic vesicle. It localises to the COPII-coated vesicle membrane. It is found in the nucleus. With respect to regulation, activation by cleavage is down-regulated upon activation of SIRT3-dependent PRKAA1/AMPK-alpha signaling cascade which leads to inhibition of ATP-consuming lipogenesis to restore cellular energy balance. Its function is as follows. Precursor of the transcription factor form (Processed sterol regulatory element-binding protein 2), which is embedded in the endoplasmic reticulum membrane. Low sterol concentrations promote processing of this form, releasing the transcription factor form that translocates into the nucleus and activates transcription of genes involved in cholesterol biosynthesis. In terms of biological role, key transcription factor that regulates expression of genes involved in cholesterol biosynthesis. Binds to the sterol regulatory element 1 (SRE-1) (5'-ATCACCCCAC-3'). Has dual sequence specificity binding to both an E-box motif (5'-ATCACGTGA-3') and to SRE-1 (5'-ATCACCCCAC-3'). Regulates transcription of genes related to cholesterol synthesis pathway. The sequence is that of Sterol regulatory element-binding protein 2 from Homo sapiens (Human).